The primary structure comprises 565 residues: FACT complex subunit ctc-1 (565 aa).

Disordered regions lie at residues 151 to 173 (GNDG…ASAG) and 477 to 565 (LGDD…KKTA). Residues 152–165 (NDGGKSNGHSGTGG) show a composition bias toward gly residues. Acidic residues-rich tracts occupy residues 478–489 (GDDDMASSDEEA), 500–522 (DEDE…AEEY), and 532–553 (GSEE…DDDE).

It belongs to the SSRP1 family. In terms of assembly, forms a stable heterodimer with ctc-2/spt16. The dimer of ctc-1 and ctc-2 weakly associates with multiple molecules of nhp-1/nhp6 to form the FACT complex.

It is found in the nucleus. It localises to the chromosome. Functionally, component of the FACT complex, a general chromatin factor that acts to reorganize nucleosomes. The FACT complex is involved in multiple processes that require DNA as a template such as mRNA elongation, DNA replication and DNA repair. During transcription elongation the FACT complex acts as a histone chaperone that both destabilizes and restores nucleosomal structure. It facilitates the passage of RNA polymerase II and transcription by promoting the dissociation of one histone H2A-H2B dimer from the nucleosome, then subsequently promotes the reestablishment of the nucleosome following the passage of RNA polymerase II. The polypeptide is FACT complex subunit ctc-1 (ctc-1) (Neurospora crassa (strain ATCC 24698 / 74-OR23-1A / CBS 708.71 / DSM 1257 / FGSC 987)).